A 638-amino-acid polypeptide reads, in one-letter code: MTEKTIRLTTAQALVKFLNQQYIEVDGEMAPFVDGIFTLFGHGNVVGIGQALEEAPGHLKVYQGKNEQGMAHAAIAYAKQKNRQRIYACSTSAGPGSANLITAAGTALANNLPVLFLPADTFATRQPDPVLQQLEHESSTAITTNDGFQAVSRYFDRVQRPEQLMSALIRAFEVMTNPASAGPATICIAQDTEGEAFDYPVEFFQKRIHYLNRQIPTKRELTEAARLIKASKTPVIIVGGGARYSRAREELIALSEQTNIPLVETHAGKSTLEFDFKNNLGGTGILGTLAANKAIRDADLVIGIGTRYTDFTTSSKTAFDPTTKFININVSRMQTYKLDAFQVVGDAKATLAELAPLLKGYQTQFGNKIAAYKTEWLDERARLQTTKFNRETFTPEIKDQFDQAILNEYADRLQTEFTQTEALITINDNVAPDSIVVCSAGSLPGDLQRLWNPAVPDTYHLEYGYSCMGYEINGALGAKMAAAKKQEVYAIVGDGSFCMSHSELLTSLQYGKKINIMLFDNSGFGCINNLQMANGSDSFFCEFRDSDNQIMQVDYAKIAEGYGAKVYRANTKEDLISALEDAKTQSKTTLIEMKVLPKTMSEGYLNWWNVGVSEVSNKESIKQAYEEKQANLKNARLY.

Glutamate 67 provides a ligand contact to thiamine diphosphate. Residues serine 442–glycine 523 are thiamine pyrophosphate binding. Mg(2+) is bound by residues aspartate 494 and asparagine 521.

It belongs to the TPP enzyme family. Requires Mg(2+) as cofactor. Thiamine diphosphate is required as a cofactor.

It catalyses the reaction 3D-3,5/4-trihydroxycyclohexane-1,2-dione + H2O = 5-deoxy-D-glucuronate + H(+). Its pathway is polyol metabolism; myo-inositol degradation into acetyl-CoA; acetyl-CoA from myo-inositol: step 3/7. Functionally, involved in the cleavage of the C1-C2 bond of 3D-(3,5/4)-trihydroxycyclohexane-1,2-dione (THcHDO) to yield 5-deoxy-glucuronate (5DG). The chain is 3D-(3,5/4)-trihydroxycyclohexane-1,2-dione hydrolase from Listeria monocytogenes serotype 4b (strain F2365).